The sequence spans 514 residues: ATP synthase subunit alpha (514 aa).

170-177 (GDRQIGKT) is an ATP binding site.

Belongs to the ATPase alpha/beta chains family. F-type ATPases have 2 components, CF(1) - the catalytic core - and CF(0) - the membrane proton channel. CF(1) has five subunits: alpha(3), beta(3), gamma(1), delta(1), epsilon(1). CF(0) has three main subunits: a(1), b(2) and c(9-12). The alpha and beta chains form an alternating ring which encloses part of the gamma chain. CF(1) is attached to CF(0) by a central stalk formed by the gamma and epsilon chains, while a peripheral stalk is formed by the delta and b chains.

It is found in the cell inner membrane. It catalyses the reaction ATP + H2O + 4 H(+)(in) = ADP + phosphate + 5 H(+)(out). In terms of biological role, produces ATP from ADP in the presence of a proton gradient across the membrane. The alpha chain is a regulatory subunit. The polypeptide is ATP synthase subunit alpha (Marinobacter nauticus (strain ATCC 700491 / DSM 11845 / VT8) (Marinobacter aquaeolei)).